Reading from the N-terminus, the 464-residue chain is Macrophage metalloelastase (464 aa).

The N-terminal stretch at 1 to 17 (MKFLLLILTLWVTSSGA) is a signal peptide. A propeptide spans 18-100 (DPLKENDMLF…DVYHFKTMPG (83 aa)) (activation peptide). Residue asparagine 69 is glycosylated (N-linked (GlcNAc...) asparagine). The short motif at 85–92 (PRCGVPDV) is the Cysteine switch element. A Zn(2+)-binding site is contributed by cysteine 87. Residues aspartate 119 and aspartate 153 each coordinate Ca(2+). The Zn(2+) site is built by histidine 163 and aspartate 165. The Ca(2+) site is built by aspartate 170, glycine 171, glycine 173, and valine 175. Histidine 178 lines the Zn(2+) pocket. Ca(2+) contacts are provided by glycine 185, glycine 187, and aspartate 189. Zn(2+) is bound at residue histidine 191. Ca(2+)-binding residues include aspartate 193, glutamate 194, and glutamate 196. Residue histidine 213 coordinates Zn(2+). Glutamate 214 is an active-site residue. Positions 217 and 223 each coordinate Zn(2+). Hemopexin repeat units follow at residues 274-323 (PTAC…WPTL), 324-370 (PSGI…GFPD), 372-420 (VKKI…FPGI), and 421-464 (GPKI…WFDC). An intrachain disulfide couples cysteine 277 to cysteine 464. Residues aspartate 284, glutamate 328, aspartate 376, and aspartate 425 each contribute to the Ca(2+) site.

The protein belongs to the peptidase M10A family. Ca(2+) is required as a cofactor. The cofactor is Zn(2+).

Its subcellular location is the secreted. It localises to the extracellular space. The protein localises to the extracellular matrix. The catalysed reaction is Hydrolysis of soluble and insoluble elastin. Specific cleavages are also produced at 14-Ala-|-Leu-15 and 16-Tyr-|-Leu-17 in the B chain of insulin.. Functionally, may be involved in tissue injury and remodeling. Has significant elastolytic activity. Can accept large and small amino acids at the P1' site, but has a preference for leucine. Aromatic or hydrophobic residues are preferred at the P1 site, with small hydrophobic residues (preferably alanine) occupying P3. The sequence is that of Macrophage metalloelastase (MMP12) from Oryctolagus cuniculus (Rabbit).